The primary structure comprises 508 residues: Photosystem II CP47 reaction center protein (508 aa).

6 consecutive transmembrane segments (helical) span residues 21–36, 101–115, 140–156, 203–218, 237–252, and 457–472; these read SVHI…WAGS, IVFS…IWHW, GIHL…FGAF, IAAG…FHLS, VLSS…AFVV, and SFAL…HGAR.

It belongs to the PsbB/PsbC family. PsbB subfamily. PSII is composed of 1 copy each of membrane proteins PsbA, PsbB, PsbC, PsbD, PsbE, PsbF, PsbH, PsbI, PsbJ, PsbK, PsbL, PsbM, PsbT, PsbX, PsbY, PsbZ, Psb30/Ycf12, at least 3 peripheral proteins of the oxygen-evolving complex and a large number of cofactors. It forms dimeric complexes. Binds multiple chlorophylls. PSII binds additional chlorophylls, carotenoids and specific lipids. serves as cofactor.

It localises to the plastid. The protein resides in the chloroplast thylakoid membrane. In terms of biological role, one of the components of the core complex of photosystem II (PSII). It binds chlorophyll and helps catalyze the primary light-induced photochemical processes of PSII. PSII is a light-driven water:plastoquinone oxidoreductase, using light energy to abstract electrons from H(2)O, generating O(2) and a proton gradient subsequently used for ATP formation. This is Photosystem II CP47 reaction center protein from Atropa belladonna (Belladonna).